Reading from the N-terminus, the 114-residue chain is Hydrogenase maturation factor HypA (114 aa).

Histidine 2 contacts Ni(2+). Cysteine 70, cysteine 73, cysteine 86, and cysteine 89 together coordinate Zn(2+).

The protein belongs to the HypA/HybF family.

Its function is as follows. Involved in the maturation of [NiFe] hydrogenases. Required for nickel insertion into the metal center of the hydrogenase. This chain is Hydrogenase maturation factor HypA, found in Crocosphaera subtropica (strain ATCC 51142 / BH68) (Cyanothece sp. (strain ATCC 51142)).